A 270-amino-acid chain; its full sequence is Ribosomal RNA-processing protein 7 homolog (270 aa).

Residues 233-268 are a coiled coil; sequence TFQIKKNRQEKAQELLKKFEEDRKRITQLKQARNFK.

This sequence belongs to the RRP7 family.

In Caenorhabditis elegans, this protein is Ribosomal RNA-processing protein 7 homolog.